The following is a 602-amino-acid chain: Laccase 1 (602 aa).

The signal sequence occupies residues 1–20 (MDHFARVSLVAALLYTNTWA). Plastocyanin-like domains are found at residues 30–128 (TWEE…VRPK) and 157–345 (YLVV…RIPN). Cu cation is bound by residues histidine 78, histidine 80, histidine 108, and histidine 110. 7 N-linked (GlcNAc...) asparagine glycosylation sites follow: asparagine 176, asparagine 241, asparagine 264, asparagine 388, asparagine 430, asparagine 454, and asparagine 470. Residues 461–584 (NEGLLLRTRN…GGMGMVIMDG (124 aa)) enclose the Plastocyanin-like 3 domain. Cu cation is bound by residues histidine 492, histidine 495, and histidine 497. A glycan (N-linked (GlcNAc...) asparagine) is linked at asparagine 512. Residues histidine 566, cysteine 567, histidine 568, and histidine 572 each contribute to the Cu cation site.

The protein belongs to the multicopper oxidase family. Cu cation serves as cofactor.

Its subcellular location is the cell surface. The protein operates within pigment biosynthesis. Laccase; part of the Pks1 gene cluster that mediates the biosynthesis of an anthraquinone derivative pigment that contributes to conidial pigmentation that provides protection from UV radiation, heat and cold stress. The polyketide synthase Pks1 produces 1-acetyl-2,4,6,8-tetrahydroxy-9,10-anthraquinone though condensation of acetyl-CoA with malonyl-CoA. The dehydratase EthD and the laccase Mlac1 further convert the anthraquinone derivative into the final conidial pigment. This chain is Laccase 1, found in Metarhizium album (strain ARSEF 1941).